Consider the following 538-residue polypeptide: Frizzled-4 (538 aa).

Positions 1–37 (MAWQGTGPSVRGMPGGVRLRLGLLLLQLLLLQRPALG) are cleaved as a signal peptide. Residues 38-213 (FGDEEERRCD…KCGYDAGLYS (176 aa)) are Extracellular-facing. The FZ domain occupies 41–162 (EEERRCDPIR…NDHNHMCMEG (122 aa)). 8 disulfide bridges follow: C46/C107, C54/C100, C91/C129, C118/C159, C122/C146, C182/C201, C205/C283, and C303/C378. Residue N60 is glycosylated (N-linked (GlcNAc...) asparagine). N145 is a glycosylation site (N-linked (GlcNAc...) asparagine). Residues 214–244 (RSAKEFTDIWMAVWASLCFISTTFTVLTFLI) form a helical membrane-spanning segment. Residues 245–250 (DSSRFS) lie on the Cytoplasmic side of the membrane. The helical transmembrane segment at 251 to 276 (YPERPIIFLSMCYNIYSIAYIVRLTV) threads the bilayer. The Extracellular segment spans residues 277–300 (GRERISCDFEEAAEPVLIQEGLKN). A helical transmembrane segment spans residues 301–334 (TGCAIIFLLMYFFGMASSIWWVILTLTWFLAAGL). Residues 335 to 337 (KWG) are Cytoplasmic-facing. The chain crosses the membrane as a helical span at residues 338–366 (HEAIEMHSSYFHIAAWAIPAVKTIVILIM). At 367–384 (RLVDADELTGLCYVGNQS) the chain is on the extracellular side. N382 is a glycosylation site (N-linked (GlcNAc...) asparagine). The chain crosses the membrane as a helical span at residues 385–419 (LDALTGFVVAPLFTYLVIGTLFIAAGLVALFKIRS). At 420 to 432 (NLQKDGTKTDKLE) the chain is on the cytoplasmic side. The helical transmembrane segment at 433 to 461 (RLMVKIGVFSVLYTVPATCVIACYFYEIS) threads the bilayer. Topologically, residues 462–474 (NWALFRYSADDSN) are extracellular. Residues 475 to 496 (MAVEMLKIFMSLLVGITSGMWI) form a helical membrane-spanning segment. Topologically, residues 497-538 (WSAKTLHTWQKCSNRLVNSGKVKREKRGNGWVKPGKGNETVV) are cytoplasmic. Residues 500–505 (KTLHTW) carry the Lys-Thr-X-X-X-Trp motif, mediates interaction with the PDZ domain of Dvl family members motif. Residues 536 to 538 (TVV) carry the PDZ-binding motif.

This sequence belongs to the G-protein coupled receptor Fz/Smo family. Interacts with MAGI3 and NDP. Component of a complex, at least composed of TSPAN12, FZD4 and norrin (NDP). Interacts (via FZ domain) with TSKU; TSKU competes with WNT2B for binding to FZD4, inhibiting Wnt signaling and repressing peripheral eye development. Interacts with glypican GPC3. Post-translationally, ubiquitinated by ZNRF3, leading to its degradation by the proteasome.

It localises to the cell membrane. Its function is as follows. Receptor for Wnt proteins. Most of frizzled receptors are coupled to the beta-catenin (CTNNB1) canonical signaling pathway, which leads to the activation of disheveled proteins, inhibition of GSK-3 kinase, nuclear accumulation of beta-catenin (CTNNB1) and activation of Wnt target genes. Plays a critical role in retinal vascularization by acting as a receptor for Wnt proteins and norrin (NDP). In retina, it can be both activated by Wnt protein-binding, but also by a Wnt-independent signaling via binding of norrin (NDP), promoting in both cases beta-catenin (CTNNB1) accumulation and stimulation of LEF/TCF-mediated transcriptional programs. A second signaling pathway involving PKC and calcium fluxes has been seen for some family members, but it is not yet clear if it represents a distinct pathway or if it can be integrated in the canonical pathway, as PKC seems to be required for Wnt-mediated inactivation of GSK-3 kinase. Both pathways seem to involve interactions with G-proteins. May be involved in transduction and intercellular transmission of polarity information during tissue morphogenesis and/or in differentiated tissues. The protein is Frizzled-4 (Fzd4) of Rattus norvegicus (Rat).